Reading from the N-terminus, the 115-residue chain is Tyrosine-protein phosphatase 21 (115 aa).

The 115-residue stretch at 1–115 (WLMIVEKECR…EIGGDAPMVV (115 aa)) folds into the Tyrosine-protein phosphatase domain. Asp-83 is a binding site for substrate.

It belongs to the protein-tyrosine phosphatase family.

It catalyses the reaction O-phospho-L-tyrosyl-[protein] + H2O = L-tyrosyl-[protein] + phosphate. The chain is Tyrosine-protein phosphatase 21 (STY-21) from Styela plicata (Wrinkled sea squirt).